The chain runs to 120 residues: MDYEFRHDIGGQVIALFSMGHEAVGHWLNEEVKGDLALLSRIEQEAAALKGSERQWQLEGHEYTLWLDSEEVMVRANQLALESDELDDGMRYYDEESLSLCGLEDFLQVLTRYRSFIQQH.

It belongs to the UPF0231 family.

The chain is UPF0231 protein NT01EI_0766 from Edwardsiella ictaluri (strain 93-146).